Here is a 203-residue protein sequence, read N- to C-terminus: GTP cyclohydrolase-2 (203 aa).

49 to 53 (RIHSE) contributes to the GTP binding site. C54, C65, and C67 together coordinate Zn(2+). Residues Q70, 92–94 (EGR), and T114 contribute to the GTP site. Residue D126 is the Proton acceptor of the active site. Residue R128 is the Nucleophile of the active site. The GTP site is built by T149 and K154.

It belongs to the GTP cyclohydrolase II family. The cofactor is Zn(2+).

The enzyme catalyses GTP + 4 H2O = 2,5-diamino-6-hydroxy-4-(5-phosphoribosylamino)-pyrimidine + formate + 2 phosphate + 3 H(+). It functions in the pathway cofactor biosynthesis; riboflavin biosynthesis; 5-amino-6-(D-ribitylamino)uracil from GTP: step 1/4. Its function is as follows. Catalyzes the conversion of GTP to 2,5-diamino-6-ribosylamino-4(3H)-pyrimidinone 5'-phosphate (DARP), formate and pyrophosphate. In Shewanella sp. (strain MR-7), this protein is GTP cyclohydrolase-2.